The chain runs to 146 residues: Tol-Pal system protein TolR (146 aa).

Residues 16 to 36 (VVPYIDVMLVLLVIFMVTAPM) traverse the membrane as a helical segment.

The protein belongs to the ExbD/TolR family. As to quaternary structure, the Tol-Pal system is composed of five core proteins: the inner membrane proteins TolA, TolQ and TolR, the periplasmic protein TolB and the outer membrane protein Pal. They form a network linking the inner and outer membranes and the peptidoglycan layer.

It localises to the cell inner membrane. Its function is as follows. Part of the Tol-Pal system, which plays a role in outer membrane invagination during cell division and is important for maintaining outer membrane integrity. The sequence is that of Tol-Pal system protein TolR from Pseudomonas aeruginosa (strain ATCC 15692 / DSM 22644 / CIP 104116 / JCM 14847 / LMG 12228 / 1C / PRS 101 / PAO1).